A 643-amino-acid chain; its full sequence is Threonine--tRNA ligase (643 aa).

The 61-residue stretch at 1 to 61 (MPTIKFIDGT…TNDSIVKFVY (61 aa)) folds into the TGS domain. A catalytic region spans residues 244–535 (DHRKISKILD…LIEEYIGNFP (292 aa)). Positions 335, 386, and 512 each coordinate Zn(2+).

The protein belongs to the class-II aminoacyl-tRNA synthetase family. As to quaternary structure, homodimer. Zn(2+) is required as a cofactor.

The protein localises to the cytoplasm. It catalyses the reaction tRNA(Thr) + L-threonine + ATP = L-threonyl-tRNA(Thr) + AMP + diphosphate + H(+). Functionally, catalyzes the attachment of threonine to tRNA(Thr) in a two-step reaction: L-threonine is first activated by ATP to form Thr-AMP and then transferred to the acceptor end of tRNA(Thr). Also edits incorrectly charged L-seryl-tRNA(Thr). This is Threonine--tRNA ligase from Buchnera aphidicola subsp. Baizongia pistaciae (strain Bp).